The sequence spans 95 residues: uncharacterized protein (95 aa).

The tract at residues 1-64 is disordered; sequence MEIDDIFASK…PKGASGRKRT (64 aa). A compositionally biased stretch (basic and acidic residues) spans 18–28; the sequence is KSNDSKSEAKA. A compositionally biased stretch (polar residues) spans 35–49; that stretch reads TKSTPSRPKPTNNQD.

This is an uncharacterized protein from Schizosaccharomyces pombe (strain 972 / ATCC 24843) (Fission yeast).